A 499-amino-acid chain; its full sequence is DNA-directed RNA polymerase subunit Rpo2N (499 aa).

It belongs to the RNA polymerase beta chain family. As to quaternary structure, part of the RNA polymerase complex.

The protein resides in the cytoplasm. The enzyme catalyses RNA(n) + a ribonucleoside 5'-triphosphate = RNA(n+1) + diphosphate. Functionally, DNA-dependent RNA polymerase (RNAP) catalyzes the transcription of DNA into RNA using the four ribonucleoside triphosphates as substrates. The Rpo2 subunit (Rpo2N and Rpo2C in this organism) is implicated in DNA promoter recognition and in nucleotide binding. In Methanococcus vannielii (strain ATCC 35089 / DSM 1224 / JCM 13029 / OCM 148 / SB), this protein is DNA-directed RNA polymerase subunit Rpo2N.